The primary structure comprises 1040 residues: Multidrug resistance protein MdtB (1040 aa).

The next 12 membrane-spanning stretches (helical) occupy residues 16–36, 347–367, 369–389, 396–416, 440–460, 472–492, 537–557, 863–883, 888–908, 911–931, 968–988, and 998–1018; these read FIMRPVATTLLMVAILLAGII, LMMAIALVVMIIYLFLRNIPA, IIPGVAVPLSLIGTFAVMVFL, LTLMALTIATGFVVDDAIVVI, IGFTIISLTFSLIAVLIPLLF, FAITLAVAILISAVVSLTLTP, WLTLSVALSTLLLSVLLWVFI, LGSTVWLIVAAVVAMYIVLGI, FIHPITILSTLPTAGVGALLA, IAGSELDVIAIIGIILLIGIV, ILMTTLAALLGALPLMLSTGV, and IGMVGGLVVSQVLTLFTTPVI.

The protein belongs to the resistance-nodulation-cell division (RND) (TC 2.A.6) family. MdtB subfamily. As to quaternary structure, part of a tripartite efflux system composed of MdtA, MdtB and MdtC. MdtB forms a heteromultimer with MdtC.

The protein resides in the cell inner membrane. This chain is Multidrug resistance protein MdtB, found in Shigella boydii serotype 18 (strain CDC 3083-94 / BS512).